We begin with the raw amino-acid sequence, 318 residues long: MFMANLLLVILPALVAMAFLTLTERKVLGYMQFRKGPNIVGPYGMLQPFADAMKLFTKEPLLPTTSTSMLYLTAPALALSIALLLWTPLPMPXPLMNFNLGLLFILATSSLAVYSILWSGWASNSNYALIGALRAVAQTISYEVTLAIILLSVLLMSGSFNLQSLITTQEHSWLLFPSWPLAMMWFTSTLAETNRAPXDLTEGESELVSGFNIEYAXGSFALFFMGEYMNIIMMNALTTTIFLAASYNMMTPETYSINFMAKALLLTTLFLWIRAAYPRFRYDQLMHLLWKNFLPLTLALCMWYISMPTLTSSIPPQM.

Transmembrane regions (helical) follow at residues 2 to 22 (FMANLLLVILPALVAMAFLTL), 69 to 89 (MLYLTAPALALSIALLLWTPL), 98 to 118 (FNLGLLFILATSSLAVYSILW), 140 to 160 (ISYEVTLAIILLSVLLMSGSF), 171 to 191 (HSWLLFPSWPLAMMWFTSTLA), 222 to 242 (LFFMGEYMNIIMMNALTTTIF), 253 to 273 (ETYSINFMAKALLLTTLFLWI), and 285 to 305 (LMHLLWKNFLPLTLALCMWYI).

It belongs to the complex I subunit 1 family. In terms of assembly, core subunit of respiratory chain NADH dehydrogenase (Complex I) which is composed of 45 different subunits.

Its subcellular location is the mitochondrion inner membrane. It catalyses the reaction a ubiquinone + NADH + 5 H(+)(in) = a ubiquinol + NAD(+) + 4 H(+)(out). Its function is as follows. Core subunit of the mitochondrial membrane respiratory chain NADH dehydrogenase (Complex I) which catalyzes electron transfer from NADH through the respiratory chain, using ubiquinone as an electron acceptor. Essential for the catalytic activity and assembly of complex I. The sequence is that of NADH-ubiquinone oxidoreductase chain 1 (MT-ND1) from Saguinus leucopus (Silvery-brown bare-face tamarin).